The sequence spans 369 residues: S-(hydroxymethyl)glutathione dehydrogenase (369 aa).

The Zn(2+) site is built by Cys40, His62, Cys92, Cys95, Cys98, Cys106, and Cys169.

This sequence belongs to the zinc-containing alcohol dehydrogenase family. Class-III subfamily. In terms of assembly, homodimer. Requires Zn(2+) as cofactor.

Its subcellular location is the cytoplasm. The enzyme catalyses S-(hydroxymethyl)glutathione + NADP(+) = S-formylglutathione + NADPH + H(+). It carries out the reaction S-(hydroxymethyl)glutathione + NAD(+) = S-formylglutathione + NADH + H(+). It catalyses the reaction a primary alcohol + NAD(+) = an aldehyde + NADH + H(+). The catalysed reaction is a secondary alcohol + NAD(+) = a ketone + NADH + H(+). The enzyme catalyses S-nitrosoglutathione + NADH + H(+) = S-(hydroxysulfenamide)glutathione + NAD(+). Functionally, has high formaldehyde dehydrogenase activity in the presence of glutathione and catalyzes the oxidation of normal alcohols in a reaction that is not GSH-dependent. In addition, hemithiolacetals other than those formed from GSH, including omega-thiol fatty acids, also are substrates. Also acts as a S-nitroso-glutathione reductase by catalyzing the NADH-dependent reduction of S-nitrosoglutathione. The sequence is that of S-(hydroxymethyl)glutathione dehydrogenase (frmA) from Escherichia coli O6:H1 (strain CFT073 / ATCC 700928 / UPEC).